The sequence spans 223 residues: Small ribosomal subunit protein uS5 (223 aa).

The segment at 1–66 (MPPQQQRGRG…AERAQAETEF (66 aa)) is disordered. Over residues 13 to 22 (RGPGGPGGPG) the composition is skewed to gly residues. Residues 53–66 (GGDKAERAQAETEF) show a composition bias toward basic and acidic residues. The S5 DRBM domain maps to 66-129 (FQERVVQIRR…SDARKALIRV (64 aa)).

Belongs to the universal ribosomal protein uS5 family. In terms of assembly, part of the 30S ribosomal subunit. Contacts proteins S4 and S8.

With S4 and S12 plays an important role in translational accuracy. Functionally, located at the back of the 30S subunit body where it stabilizes the conformation of the head with respect to the body. The polypeptide is Small ribosomal subunit protein uS5 (Gloeobacter violaceus (strain ATCC 29082 / PCC 7421)).